The following is a 266-amino-acid chain: Protein PYRICULARIA ORYZAE RESISTANCE 21 (266 aa).

The HMA domain occupies 1–68 (MGILVILVDL…IWCKAGKIIK (68 aa)). A metal cation-binding residues include cysteine 12 and cysteine 15. A disordered region spans residues 129–156 (CEKPKPCEKPPPCKPEEPPKPPPEKPPP). The segment covering 142–156 (KPEEPPKPPPEKPPP) has biased composition (basic and acidic residues).

Functionally, involved in defense responses. Contributes to slowing defense responses toward Magnaporthe oryzae. This Oryza sativa subsp. japonica (Rice) protein is Protein PYRICULARIA ORYZAE RESISTANCE 21.